A 33-amino-acid polypeptide reads, in one-letter code: DELTA-pseudomyrmecitoxin-Pp1a subunit B (33 aa).

In terms of assembly, heterodimer composed of subunit A and subunit B (DELTA-PSDTX-Pp1a); disulfide-linked. Expressed by the venom gland.

The protein resides in the secreted. Functionally, this heterodimer has insecticidal and cytotoxic properties. Induces immediate paralysis when injected into blowflies (Lucilia cuprina), and then death within 24 hours. Also inhibits the growth of Aedes albopictus mosquito C6/36 cells. In Pseudomyrmex penetrator (Ant), this protein is DELTA-pseudomyrmecitoxin-Pp1a subunit B.